The primary structure comprises 563 residues: Probable trehalase (563 aa).

Residues Arg154, 161–162 (WD), Asn198, 207–209 (RSQ), 274–276 (RPE), and Gly307 each bind substrate. Catalysis depends on proton donor/acceptor residues Asp309 and Glu517. Glu532 contributes to the substrate binding site.

It belongs to the glycosyl hydrolase 37 family.

It carries out the reaction alpha,alpha-trehalose + H2O = alpha-D-glucose + beta-D-glucose. In terms of biological role, involved in the regulation of trehalose content by hydrolyzing trehalose to glucose. The protein is Probable trehalase of Oryza sativa subsp. japonica (Rice).